Here is an 858-residue protein sequence, read N- to C-terminus: MAKPTISPGMQQYLDIKENYPDAFLLFRMGDFYELFYDDAVKAAQILEISLTSRNKNAEKPIPMAGVPYHSAQQYIDVLVELGYKVAIAEQMEDPKKAVGVVKREVVQVVTPGTVVESTKPDSANNFLVAIDSQDQQTFGLAYMDVSTGEFQATLLTDFESVRSEILNLKAREIVVGYQLTDEKNHLLTKQMNLLLSYEDERLNDIHLIDEQLTDLEISAAEKLLQYVHRTQKRELSHLQKVVHYEIKDYLQMSYATKNSLDLLENARTSKKHGSLYWLLDETKTAMGTRMLRTWIDRPLVSMNRIKERQDIIQVFLDYFFERNDLTESLKGVYDIERLASRVSFGKANPKDLLQLGQTLSQIPRIKMILQSFNQPELDIVVNKIDTMPELESLINTAIAPEAQATITEGNIIKSGFDKQLDNYRTVMREGTGWIADIEAKERAASGIGTLKIDYNKKDGYYFHVTNSNLSLVPEHFFRKATLKNSERYGTAELAKIEGEVLEAREQSSNLEYDIFMRVRAQVESYIKRLQELAKTIATVDVLQSLAVVAENHHYVRPKFNDEHQIKIKNGRHATVEKVMGVQEYIPNSIYFDSQTDIQLITGPNMSGKSTYMRQLALTVIMAQMGGFVSADEVDLPVFDAIFTRIGAADDLISGQSTFMVEMMEANQAVKRASDKSLILFDELGRGTATYDGMALAQSIIEYIHDRVRAKTMFATHYHELTDLSEQLTRLVNVHVATLERDGEVTFLHKIESGPADKSYGIHVAKIAGLPIDLLDRATDILSQLEADAVQLIVSAPQEAVTADLNEELDSEKQQGQLSLFEEPSNAGRVIEELEAIDIMNLTPMQAMNAIFDLKKLL.

603–610 (GPNMSGKS) contacts ATP.

It belongs to the DNA mismatch repair MutS family.

In terms of biological role, this protein is involved in the repair of mismatches in DNA. It is possible that it carries out the mismatch recognition step. This protein has a weak ATPase activity. The protein is DNA mismatch repair protein MutS of Streptococcus agalactiae serotype Ia (strain ATCC 27591 / A909 / CDC SS700).